The chain runs to 166 residues: MAAIPPDSWQPPNVYLETSMGIIVLELYWKHAPKTCKNFAELARRGYYNGTKFHRIIKDFMIQGGDPTGTGRGGASIYGKQFEDELHPDLKFTGAGILAMANAGPDTNGSQFFVTLAPTQWLDGKHTIFGRVCQGIGMVNRVGMVETNSQDRPVDDVKIIKAYPSG.

The 155-residue stretch at 10–164 (QPPNVYLETS…DDVKIIKAYP (155 aa)) folds into the PPIase cyclophilin-type domain. Residues 54–65 (HRIIKDFMIQGG), 70–71 (TG), 99–104 (AMANAG), 109–113 (GSQFF), T119, and K125 each bind cyclosporin A. S149 is subject to Phosphoserine.

It belongs to the cyclophilin-type PPIase family. PPIL1 subfamily. Identified in the spliceosome C complex. Interacts with SNW1/SKIP. Interacts with CDC40/PRP17; this interaction leads to CDC40 isomerization. Interacts with RBM22.

The protein localises to the nucleus. The enzyme catalyses [protein]-peptidylproline (omega=180) = [protein]-peptidylproline (omega=0). Inhibited by Cyclosporin A. Involved in pre-mRNA splicing as component of the spliceosome. PPIases accelerate the folding of proteins. It catalyzes the cis-trans isomerization of proline imidic peptide bonds in oligopeptides. Catalyzes prolyl peptide bond isomerization in CDC40/PRP17. Plays an important role in embryonic brain development; this function is independent of its isomerase activity. This Bos taurus (Bovine) protein is Peptidyl-prolyl cis-trans isomerase-like 1 (PPIL1).